We begin with the raw amino-acid sequence, 233 residues long: Small ribosomal subunit protein uS2c (233 aa).

It belongs to the universal ribosomal protein uS2 family.

The protein localises to the plastid. It localises to the apicoplast. The protein is Small ribosomal subunit protein uS2c of Toxoplasma gondii.